Here is a 264-residue protein sequence, read N- to C-terminus: Endochitinase At2g43590 (264 aa).

A signal peptide spans 1–24 (MAFTKISLVLLLCLLGFFSETVKS). In terms of domain architecture, Chitin-binding type-1 spans 25–59 (QNCGCAPNLCCSQFGYCGTDDAYCGVGCRSGPCRG). Cystine bridges form between cysteine 27–cysteine 35, cysteine 29–cysteine 41, cysteine 34–cysteine 48, and cysteine 52–cysteine 57. The interval 66 to 264 (GSVGSIVTQG…GVDPGPNLSC (199 aa)) is catalytic. Glutamate 128 (proton donor) is an active-site residue. Asparagine 261 carries an N-linked (GlcNAc...) asparagine glycan.

The protein belongs to the glycosyl hydrolase 19 family. Chitinase class I subfamily.

The catalysed reaction is Random endo-hydrolysis of N-acetyl-beta-D-glucosaminide (1-&gt;4)-beta-linkages in chitin and chitodextrins.. This Arabidopsis thaliana (Mouse-ear cress) protein is Endochitinase At2g43590.